Reading from the N-terminus, the 240-residue chain is Vesicle-associated membrane protein 727 (240 aa).

The Cytoplasmic portion of the chain corresponds to 1–215 (MSQKGLIYSF…MWLQSLQMKL (215 aa)). Positions 6–133 (LIYSFVAKGT…NLDREFGPIL (128 aa)) constitute a Longin domain. Residues 149–209 (KLSKLKAQIT…RQLRRKMWLQ (61 aa)) form the v-SNARE coiled-coil homology domain. The chain crosses the membrane as a helical; Anchor for type IV membrane protein span at residues 216–236 (MVAGAVFSFILIVWVVACGGF). At 237-240 (KCSS) the chain is on the vesicular side.

Belongs to the synaptobrevin family. In terms of assembly, interacts with subunits of the class C core vacuole/endosome tethering (CORVET) complex including VPS11, VCL1, VPS18, VPS33, VPS3 and VPS8. As to expression, highly expressed in flowers. Detected in leaves, stems and roots.

It is found in the early endosome membrane. Its subcellular location is the endosome membrane. Functionally, involved in the targeting and/or fusion of transport vesicles to their target membrane. The polypeptide is Vesicle-associated membrane protein 727 (VAMP727) (Arabidopsis thaliana (Mouse-ear cress)).